A 78-amino-acid chain; its full sequence is Large ribosomal subunit protein eL20 (78 aa).

The protein belongs to the eukaryotic ribosomal protein eL20 family. As to quaternary structure, part of the 50S ribosomal subunit. Binds 23S rRNA.

In Nanoarchaeum equitans (strain Kin4-M), this protein is Large ribosomal subunit protein eL20.